A 630-amino-acid chain; its full sequence is Probable potassium transport system protein Kup (630 aa).

12 helical membrane passes run 17–37 (LAIA…LYSL), 51–71 (PSAI…VVGI), 105–125 (ITGL…GDAV), 144–164 (PQLS…LFWI), 175–195 (LFGP…IYHI), 218–238 (VLLA…AEAL), 255–275 (YVLV…LLLL), 283–303 (PFFL…STVA), 344–364 (IYVP…VIGF), 374–394 (YGIA…VVMV), 402–422 (LLVA…FGAN), and 428–448 (QGGW…MTWY).

Belongs to the HAK/KUP transporter (TC 2.A.72) family.

The protein localises to the cell inner membrane. The catalysed reaction is K(+)(in) + H(+)(in) = K(+)(out) + H(+)(out). Transport of potassium into the cell. Likely operates as a K(+):H(+) symporter. The chain is Probable potassium transport system protein Kup from Burkholderia pseudomallei (strain K96243).